Reading from the N-terminus, the 862-residue chain is DNA mismatch repair protein MutS (862 aa).

An ATP-binding site is contributed by 608 to 615 (GPNMAGKS).

It belongs to the DNA mismatch repair MutS family.

In terms of biological role, this protein is involved in the repair of mismatches in DNA. It is possible that it carries out the mismatch recognition step. This protein has a weak ATPase activity. The chain is DNA mismatch repair protein MutS from Borreliella afzelii (strain PKo) (Borrelia afzelii).